A 321-amino-acid polypeptide reads, in one-letter code: Beta-ketoacyl-[acyl-carrier-protein] synthase III (321 aa).

Active-site residues include cysteine 113 and histidine 248. Residues glutamine 249 to arginine 253 are ACP-binding. Asparagine 278 is a catalytic residue.

It belongs to the thiolase-like superfamily. FabH family. As to quaternary structure, homodimer.

Its subcellular location is the cytoplasm. The enzyme catalyses malonyl-[ACP] + acetyl-CoA + H(+) = 3-oxobutanoyl-[ACP] + CO2 + CoA. Its pathway is lipid metabolism; fatty acid biosynthesis. Its function is as follows. Catalyzes the condensation reaction of fatty acid synthesis by the addition to an acyl acceptor of two carbons from malonyl-ACP. Catalyzes the first condensation reaction which initiates fatty acid synthesis and may therefore play a role in governing the total rate of fatty acid production. Possesses both acetoacetyl-ACP synthase and acetyl transacylase activities. Its substrate specificity determines the biosynthesis of branched-chain and/or straight-chain of fatty acids. The polypeptide is Beta-ketoacyl-[acyl-carrier-protein] synthase III (Erythrobacter litoralis (strain HTCC2594)).